A 135-amino-acid polypeptide reads, in one-letter code: Single-stranded DNA-binding protein RIM1, mitochondrial (135 aa).

The N-terminal 17 residues, 1–17 (MFLRTQARFFHATTKKM), are a transit peptide targeting the mitochondrion. An SSB domain is found at 19–117 (FSKMSIVGRI…LVQKDINLLK (99 aa)).

As to quaternary structure, homotetramer. Interacts with PIF1.

The protein localises to the mitochondrion. Its function is as follows. This protein binds preferentially and cooperatively to single-stranded DNA (ssDNS). Involved in mitochondrial DNA replication. Stimulates PIF1 helicase activity. The polypeptide is Single-stranded DNA-binding protein RIM1, mitochondrial (RIM1) (Saccharomyces cerevisiae (strain ATCC 204508 / S288c) (Baker's yeast)).